The sequence spans 317 residues: MKVKKISPRGYCYGVVDAMKLANEAVANPDLPRPIHILGMIVHNRHVTQAFEDLGVKTVDGEDRMQALETIDRGTVVFTAHGISPLVRKRAIEKGLTIVDASCPDVLVTHDLIREKTAEGYDVIYIGKHGHPEPEGAIGVAPDHVHLIQYEHEIDQLPSRLFERKILVTNQTTMSQWDVSALIETIQARYPHVEVHNEICNATQVRQEAVAEQAGDCELLIVVGDPKSNNSNRLAQVSKEIAGTNAYRIGDLSELDLNWLEGVETVAVTSGASTPTPITKKVIDFLSQYDPDDLSTHDKTPFLELRSILPKVKALRK.

[4Fe-4S] cluster is bound at residue C12. (2E)-4-hydroxy-3-methylbut-2-enyl diphosphate contacts are provided by H43 and H81. Positions 43 and 81 each coordinate dimethylallyl diphosphate. Isopentenyl diphosphate contacts are provided by H43 and H81. Residue C103 coordinates [4Fe-4S] cluster. (2E)-4-hydroxy-3-methylbut-2-enyl diphosphate is bound at residue H131. Dimethylallyl diphosphate is bound at residue H131. H131 contributes to the isopentenyl diphosphate binding site. E133 serves as the catalytic Proton donor. T172 serves as a coordination point for (2E)-4-hydroxy-3-methylbut-2-enyl diphosphate. Residue C200 coordinates [4Fe-4S] cluster. 3 residues coordinate (2E)-4-hydroxy-3-methylbut-2-enyl diphosphate: S228, N230, and S273. Positions 228, 230, and 273 each coordinate dimethylallyl diphosphate. Isopentenyl diphosphate-binding residues include S228, N230, and S273.

Belongs to the IspH family. It depends on [4Fe-4S] cluster as a cofactor.

It catalyses the reaction isopentenyl diphosphate + 2 oxidized [2Fe-2S]-[ferredoxin] + H2O = (2E)-4-hydroxy-3-methylbut-2-enyl diphosphate + 2 reduced [2Fe-2S]-[ferredoxin] + 2 H(+). The enzyme catalyses dimethylallyl diphosphate + 2 oxidized [2Fe-2S]-[ferredoxin] + H2O = (2E)-4-hydroxy-3-methylbut-2-enyl diphosphate + 2 reduced [2Fe-2S]-[ferredoxin] + 2 H(+). It participates in isoprenoid biosynthesis; dimethylallyl diphosphate biosynthesis; dimethylallyl diphosphate from (2E)-4-hydroxy-3-methylbutenyl diphosphate: step 1/1. The protein operates within isoprenoid biosynthesis; isopentenyl diphosphate biosynthesis via DXP pathway; isopentenyl diphosphate from 1-deoxy-D-xylulose 5-phosphate: step 6/6. In terms of biological role, catalyzes the conversion of 1-hydroxy-2-methyl-2-(E)-butenyl 4-diphosphate (HMBPP) into a mixture of isopentenyl diphosphate (IPP) and dimethylallyl diphosphate (DMAPP). Acts in the terminal step of the DOXP/MEP pathway for isoprenoid precursor biosynthesis. The protein is 4-hydroxy-3-methylbut-2-enyl diphosphate reductase of Exiguobacterium sp. (strain ATCC BAA-1283 / AT1b).